The following is a 213-amino-acid chain: uncharacterized protein (213 aa).

3 residues coordinate S-adenosyl-L-methionine: Gly53, Glu74, and Asp96.

Belongs to the methyltransferase superfamily. YrrT family.

In terms of biological role, could be a S-adenosyl-L-methionine-dependent methyltransferase. This is an uncharacterized protein from Bacillus pumilus (strain SAFR-032).